The following is a 452-amino-acid chain: Trigger factor (452 aa).

A PPIase FKBP-type domain is found at 171 to 256 (GDRVTVSFKG…ATKLEAPQET (86 aa)).

This sequence belongs to the FKBP-type PPIase family. Tig subfamily.

The protein resides in the cytoplasm. The catalysed reaction is [protein]-peptidylproline (omega=180) = [protein]-peptidylproline (omega=0). In terms of biological role, involved in protein export. Acts as a chaperone by maintaining the newly synthesized protein in an open conformation. Functions as a peptidyl-prolyl cis-trans isomerase. This Rhodopseudomonas palustris (strain ATCC BAA-98 / CGA009) protein is Trigger factor.